The following is a 383-amino-acid chain: Acetylornithine deacetylase (383 aa).

A Zn(2+)-binding site is contributed by H80. The active site involves D82. A Zn(2+)-binding site is contributed by D112. Residue E144 is part of the active site. Positions 145, 169, and 355 each coordinate Zn(2+).

The protein belongs to the peptidase M20A family. ArgE subfamily. As to quaternary structure, homodimer. Requires Zn(2+) as cofactor. Co(2+) is required as a cofactor. It depends on glutathione as a cofactor.

The protein localises to the cytoplasm. The catalysed reaction is N(2)-acetyl-L-ornithine + H2O = L-ornithine + acetate. It functions in the pathway amino-acid biosynthesis; L-arginine biosynthesis; L-ornithine from N(2)-acetyl-L-ornithine (linear): step 1/1. Catalyzes the hydrolysis of the amide bond of N(2)-acetylated L-amino acids. Cleaves the acetyl group from N-acetyl-L-ornithine to form L-ornithine, an intermediate in L-arginine biosynthesis pathway, and a branchpoint in the synthesis of polyamines. The sequence is that of Acetylornithine deacetylase from Escherichia coli O7:K1 (strain IAI39 / ExPEC).